We begin with the raw amino-acid sequence, 389 residues long: Fructose-1,6-bisphosphate aldolase/phosphatase (389 aa).

Aspartate 17 (proton acceptor; for FBP phosphatase activity) is an active-site residue. Residues aspartate 17, histidine 24, aspartate 57, and aspartate 58 each contribute to the Mg(2+) site. A beta-D-fructose 1,6-bisphosphate-binding site is contributed by histidine 24. Histidine 24 contributes to the dihydroxyacetone phosphate binding site. A beta-D-fructose 1,6-bisphosphate-binding site is contributed by tyrosine 95. Glutamine 99 is a binding site for Mg(2+). Position 108–109 (108–109) interacts with beta-D-fructose 1,6-bisphosphate; sequence GN. Aspartate 136 is a Mg(2+) binding site. Lysine 137 lines the beta-D-fructose 1,6-bisphosphate pocket. Lysine 137 provides a ligand contact to dihydroxyacetone phosphate. The Proton donor/acceptor; for FBP aldolase activity role is filled by tyrosine 233. The Mg(2+) site is built by lysine 236, aspartate 237, and aspartate 238. The active-site Schiff-base intermediate with DHAP; for FBP aldolase activity is lysine 236. Beta-D-fructose 1,6-bisphosphate-binding positions include 246 to 247, arginine 270, aspartate 291, and tyrosine 352; that span reads QS. Positions 270 and 291 each coordinate dihydroxyacetone phosphate.

The protein belongs to the FBP aldolase/phosphatase family. As to quaternary structure, homooctamer; dimer of tetramers. The cofactor is Mg(2+).

It carries out the reaction beta-D-fructose 1,6-bisphosphate + H2O = beta-D-fructose 6-phosphate + phosphate. It catalyses the reaction beta-D-fructose 1,6-bisphosphate = D-glyceraldehyde 3-phosphate + dihydroxyacetone phosphate. It functions in the pathway carbohydrate biosynthesis; gluconeogenesis. Catalyzes two subsequent steps in gluconeogenesis: the aldol condensation of dihydroxyacetone phosphate (DHAP) and glyceraldehyde-3-phosphate (GA3P) to fructose-1,6-bisphosphate (FBP), and the dephosphorylation of FBP to fructose-6-phosphate (F6P). This chain is Fructose-1,6-bisphosphate aldolase/phosphatase, found in Methanocaldococcus jannaschii (strain ATCC 43067 / DSM 2661 / JAL-1 / JCM 10045 / NBRC 100440) (Methanococcus jannaschii).